The following is a 217-amino-acid chain: Adenylate kinase (217 aa).

10-15 (GAGKGT) provides a ligand contact to ATP. An NMP region spans residues 30-59 (STGDMFRAAIKEGTELGLQAKSFMDQGALV). AMP-binding positions include T31, R36, 57-59 (ALV), 85-88 (GFPR), and Q92. Positions 126 to 163 (GRRICKTCGASYHLIFNPPAEEGKCDKDGGELYTRADD) are LID. ATP is bound at residue R127. Zn(2+) is bound by residues C130 and C133. 136–137 (SY) contributes to the ATP binding site. The Zn(2+) site is built by C150 and D153. Positions 160 and 171 each coordinate AMP. Q199 provides a ligand contact to ATP.

It belongs to the adenylate kinase family. In terms of assembly, monomer.

It is found in the cytoplasm. It catalyses the reaction AMP + ATP = 2 ADP. It functions in the pathway purine metabolism; AMP biosynthesis via salvage pathway; AMP from ADP: step 1/1. In terms of biological role, catalyzes the reversible transfer of the terminal phosphate group between ATP and AMP. Plays an important role in cellular energy homeostasis and in adenine nucleotide metabolism. This is Adenylate kinase from Lysinibacillus sphaericus (strain C3-41).